We begin with the raw amino-acid sequence, 266 residues long: Proteasome subunit beta type-7 (266 aa).

Residues 1–34 constitute a propeptide, removed in mature form; that stretch reads MENLNRGGFDFDLCNRNNVLEKTGLRMKGFMKTG. Threonine 35 (nucleophile) is an active-site residue.

The protein belongs to the peptidase T1B family. The 26S proteasome consists of a 20S proteasome core and two 19S regulatory subunits. The 20S proteasome core is composed of 28 subunits that are arranged in four stacked rings, resulting in a barrel-shaped structure. The two end rings are each formed by seven alpha subunits, and the two central rings are each formed by seven beta subunits. The catalytic chamber with the active sites is on the inside of the barrel.

It is found in the cytoplasm. The protein localises to the nucleus. The enzyme catalyses Cleavage of peptide bonds with very broad specificity.. Functionally, the proteasome is a multicatalytic proteinase complex which is characterized by its ability to cleave peptides with Arg, Phe, Tyr, Leu, and Glu adjacent to the leaving group at neutral or slightly basic pH. The proteasome has an ATP-dependent proteolytic activity. This is Proteasome subunit beta type-7 (psmB7) from Dictyostelium discoideum (Social amoeba).